The primary structure comprises 411 residues: Glutamate dehydrogenase 3, mitochondrial (411 aa).

Residues 1–18 (MNALAATSRNFRQAARLL) constitute a mitochondrion transit peptide. K102 is a catalytic residue.

It belongs to the Glu/Leu/Phe/Val dehydrogenases family. As to expression, barely expressed in leaves, spikelets and roots. Glumes and stamens specific accumulation.

The protein localises to the mitochondrion. It catalyses the reaction L-glutamate + NAD(+) + H2O = 2-oxoglutarate + NH4(+) + NADH + H(+). It carries out the reaction L-glutamate + NADP(+) + H2O = 2-oxoglutarate + NH4(+) + NADPH + H(+). In Oryza sativa subsp. japonica (Rice), this protein is Glutamate dehydrogenase 3, mitochondrial (GDH3).